The following is a 486-amino-acid chain: Probable transporter MCH1 (486 aa).

6 consecutive transmembrane segments (helical) span residues 31–51 (ISFF…LFSL), 69–89 (FIAS…GYLA), 91–111 (CYGP…SYFV), 132–152 (FGIC…SSLL), 164–184 (LAIS…SQLM), and 204–224 (FFGV…SVVS). A disordered region spans residues 236 to 260 (EMEEADEESPLMTSRSRHSHHSCED). A helical transmembrane segment spans residues 280–300 (FINFLKDKSAWLLLASLILNI). N-linked (GlcNAc...) asparagine glycosylation is present at asparagine 322. 2 helical membrane-spanning segments follow: residues 327-348 (VSIM…SDYL) and 357-377 (ICRV…QFMV). N-linked (GlcNAc...) asparagine glycosylation occurs at asparagine 390. 2 helical membrane-spanning segments follow: residues 395-415 (GGLF…DMMG) and 417-437 (TWGS…IFYG). Residue asparagine 457 is glycosylated (N-linked (GlcNAc...) asparagine). The chain crosses the membrane as a helical span at residues 458 to 478 (LTAVGLSVSLILIIIVWKGIW).

It belongs to the major facilitator superfamily.

The protein localises to the vacuole membrane. Probable transporter. This chain is Probable transporter MCH1 (MCH1), found in Debaryomyces hansenii (strain ATCC 36239 / CBS 767 / BCRC 21394 / JCM 1990 / NBRC 0083 / IGC 2968) (Yeast).